Reading from the N-terminus, the 473-residue chain is MLQIYNTLSRSKQVFKPIVPGKVKMYVCGMTVYDFCHIGHARVMIVFDMVVRWLRASGYEVLYVRNITDIDDKIINRAIENGEPISALTNRFVDAMHADSDELGLMHPDQEPRATDYIAQMQGMIGKLIENELAYQANDGDVNFAVRLLPRYGQLSGKTLDELNAGERVAVGDGKRDPLDFVLWKSAKPEEPADTRWKSPWGEGRPGWHIECSAMSCDLLGEHFDIHGGGADLQFPHHENEIAQSEGALYGKDRKVDDAPFVNYWMHNGHIRVNEEKMSKSLGNFFLIRDVLKSFDPEVIRFFMLKTHYRSPINYSDAQLEEARSGLVRLYTALAQGSKAQTISLGSSNPWAKRFADAMNDDFNTPEAIAVLFDIVSEVNRAQGEEKQVLANILKALGASLNFLQRDPTVFLQSSAKDQAGLSPEQIEEQIAARVAAKQAKDFAKADAIRKALLEQGIVLEDKPGGLTGWRRA.

Zn(2+) is bound at residue cysteine 28. The 'HIGH' region motif lies at 30–40; sequence MTVYDFCHIGH. Positions 212, 237, and 241 each coordinate Zn(2+). The 'KMSKS' region motif lies at 277–281; the sequence is KMSKS. Residue lysine 280 coordinates ATP.

The protein belongs to the class-I aminoacyl-tRNA synthetase family. As to quaternary structure, monomer. The cofactor is Zn(2+).

The protein localises to the cytoplasm. It catalyses the reaction tRNA(Cys) + L-cysteine + ATP = L-cysteinyl-tRNA(Cys) + AMP + diphosphate. The sequence is that of Cysteine--tRNA ligase from Polynucleobacter necessarius subsp. necessarius (strain STIR1).